Consider the following 301-residue polypeptide: MIYLHAIDPIAFSLGPVKVHWYGLMYLAGFGAAWCLGRQRIQAGRLLGVNIDGFSDLLFYAMMGVVLGGRVGYMLFYAFHDFLQEPLLLFRVWEGGMSFHGGLIGVLLAVAWWSRRQRMHMFDVVDFCAPLVPVGLGFGRLGNFIGGELWGKLTHNGWGVIFPRAPLSDVPAGQLAMQDVMNFVQIQEHYAAGLLGHYARHPSQLYEAFLEGLVMFIVLWLFSRKLRPRYAVSGLFALLYGVFRFLVEFVRMPDNGVYVAFGWLTRGQILSLPLIVIGLFLFWLSCRSPVLQPVPAPEVAK.

A run of 4 helical transmembrane segments spans residues 10 to 30 (IAFS…LAGF), 57 to 77 (LLFY…MLFY), 92 to 112 (VWEG…AVAW), and 119 to 139 (MHMF…LGFG). An a 1,2-diacyl-sn-glycero-3-phospho-(1'-sn-glycerol)-binding site is contributed by Arg140. The next 3 membrane-spanning stretches (helical) occupy residues 202–222 (PSQL…LWLF), 230–250 (YAVS…VEFV), and 264–284 (LTRG…LFWL).

Belongs to the Lgt family.

It is found in the cell inner membrane. It carries out the reaction L-cysteinyl-[prolipoprotein] + a 1,2-diacyl-sn-glycero-3-phospho-(1'-sn-glycerol) = an S-1,2-diacyl-sn-glyceryl-L-cysteinyl-[prolipoprotein] + sn-glycerol 1-phosphate + H(+). It functions in the pathway protein modification; lipoprotein biosynthesis (diacylglyceryl transfer). Functionally, catalyzes the transfer of the diacylglyceryl group from phosphatidylglycerol to the sulfhydryl group of the N-terminal cysteine of a prolipoprotein, the first step in the formation of mature lipoproteins. The chain is Phosphatidylglycerol--prolipoprotein diacylglyceryl transferase from Xylella fastidiosa (strain M12).